The primary structure comprises 238 residues: Fmr1 neighbor protein (238 aa).

Residues 1 to 30 are disordered; sequence MPSDRRPSQRRNRSKSRDYRGARSKVTRAD. The Cytoplasmic segment spans residues 1-79; it reads MPSDRRPSQR…CLQYLWARRH (79 aa). Over residues 15–30 the composition is skewed to basic and acidic residues; it reads KSRDYRGARSKVTRAD. A helical membrane pass occupies residues 80-100; the sequence is LGLLLLLFWTLVILFRPVNTA. Residues 101–178 lie on the Extracellular side of the membrane; sequence KLPILAEAAE…VRDKPTQVLR (78 aa). Positions 118–176 constitute a P-type domain; it reads MLDFFFPTACIIRDNQVVVACNNQPYLSESECLKSKCCSSTSGTIIKCYAPVRDKPTQV. The helical transmembrane segment at 179 to 199 threads the bilayer; sequence VFGLAAISILVLGFLPMCCCS. At 200-238 the chain is on the cytoplasmic side; sequence MCWRRKRMNRMLKVLKKQKSKGKKPKGRKASEERALLSH. Residues 214–227 show a composition bias toward basic residues; that stretch reads LKKQKSKGKKPKGR. Residues 214–238 are disordered; it reads LKKQKSKGKKPKGRKASEERALLSH. Basic and acidic residues predominate over residues 228–238; it reads KASEERALLSH.

Its subcellular location is the membrane. The protein is Fmr1 neighbor protein of Mus musculus (Mouse).